A 1941-amino-acid chain; its full sequence is MGDVKLFASSHMSKTSHSVDPSKVSSMPLTEAPAFILPPRNLCVKEGATAKFEGRVRGYPEPQVTWHRKGQAITNGGRFLLDCGVRGTFSLVIHTVREEDKGKYTCEASNGSGARQVTVELTVEGNSMKKRDQPVLSKASGFPGETRPSIWGECPPKFATKLGRAVVKEGQMWRFSCKITGRPPPQVTWLKGNVPLQPSARVSMSEKNGMQILEIRGVTRDDLGVYTCMVVNGSGKASMSAELSIPGLDNASRLAVRGTKAPSPDIRKEVTNGVSKDPETVAESKNCPSPQRSGSSARATNSHLKSPQEPKPKLCEDAPRKVPQSSILQKSTSTITLQALKVQPEARVPAIGSFSPGEDRKSLAAPQQATLPTRQSSLGGSVGNKFVTGNIPRESQRESTFPRFESQPQSQEVTEGQTVKFICEVSGIPKPDVGWFLEGIPVRRREGITEVYEDGVSHHLCLLRARTRDSRKYSCTASNSLGQVSCSWSLLVDRPNLAQTAPSFSSVLKDSVVIEGQDFVLRCSVQGTPAPRVTWLLNGQPIQFAHSICEAGVAELHIQDALPEDRGTYTCLAENAMGQVSCSATVTVQEKKGEGEREHRLSPARSKPIAPIFLQGLSDLKVMDGSQVTMTVQVSGNPPPEVIWLHDGNEIQESEDFHFEQKGGWHSLCIQEVFPEDTGTYTCEAWNSAGEVRTRAVLTVQEPHDGTQPWFISKPRSVTATLGQSVLISCAIAGDPFPTVHWLRDGRALSKDSGHFELLQNEDVFTLVLKNVQPWHAGQYEILLKNRVGECSCQVSLMLHNSPSRAPPRGREPASCEGLCGGGGVGAHGDGDRHGTLRPCWPARGQGWPEEEDGEDVRGLLKRRVETRLHTEEAIRQQEVGQLDFRDLLGKKVSTKTVSEDDLKDIPAEQMDFRANLQRQVKPKTISEEERKVHSPQQVDFRSVLAKKGTPKTPVPEKAPPKAATPDFRSVLGGKKKSPSENGGNSAEVLNVKAGESPTPAGDAQAIGALKPVGNAKPAETPKPIGNAKPTETLKPVGNTKPAETLKPIANAQPSGSLKPVTNAQPAEPQKPVGNAKSAETSKPAGKEEVKEVKNDVNCKKGQVGATGNEKRPESQGSAPVFKEKLQDVHVAEGEKLLLQCQVISDPPATVTWSLNGKTLKTTKFIVLAQEGSRFSVSIEKALPEDRGLYKCVAKNSAGQAECSCQVTVDDAQTSENTKAPEMKSRRPKSSLPPVLGTESDATVKKKPAPKTPTKAAMPPQIIQFPEDQKVRAGEPVELFGKVAGTQPITCKWMKFRKQIQESEHIKVENGESGSKLTILAARQEHCGCYTLVVENKLGSRQAQVNLTVVDKPDPPAGTPCASDIRSSSLTLSWYGSSYDGGSAVQSYNVEIWDTEDKVWKELATCRSTSFNVQDLLPDREYKFRVRAVNVYGTSEPSQESELTAVGEKPEEPKDEVEVSDDDEKEPEVDYRTVTVNTEQKVSDVYDIEERLGSGKFGQVFRLVEKKTGKIWAGKFFKAYSAKEKDNIRQEISIMNCLHHPKLVQCVDAFEEKANIVMVLEIVSGGELFERIIDEDFELTERECIKYMRQISEGVEYIHKQGIVHLDLKPENIMCVNKTGTRIKLIDFGLARRLENAGSLKVLFGTPEFVAPEVINYEPIGYATDMWSIGVICYILVSGLSPFMGDNDNETLANVTSATWDFDDEAFDEISDDAKDFISNLLKKDMKNRLDCTQCLQHPWLMKDTKNMEAKKLSKDRMKKYMARRKWQKTGNAVRAIGRLSSMAMISGLSGRKSSTGSPTSPINAEKLESEDDVSQAFLEAVAEEKPHVKPYFSKTIRDLEVVEGSAARFDCKIEGYPDPEVVWFKDDQSIRESRHFQIDYDEDGNCSLIISDVCGDDDAKYTCKAVNSLGEATCTAELIVETMEEGEGEEGGEEEEEEEE.

Ig-like C2-type domains follow at residues 33–122 (PAFI…VELT) and 156–244 (PKFA…AELS). C177 and C228 form a disulfide bridge. Y226 bears the Phosphotyrosine; by ABL1 mark. The disordered stretch occupies residues 255 to 329 (AVRGTKAPSP…RKVPQSSILQ (75 aa)). Residues 286–305 (NCPSPQRSGSSARATNSHLK) show a composition bias toward polar residues. At S295 the chain carries Phosphoserine. The segment covering 306–320 (SPQEPKPKLCEDAPR) has biased composition (basic and acidic residues). Phosphoserine occurs at positions 333 and 355. 4 consecutive Ig-like C2-type domains span residues 402–485 (PRFE…GQVS), 502–587 (PSFS…ATVT), 611–699 (PIFL…AVLT), and 709–809 (PWFI…APPR). Intrachain disulfides connect C423–C475 and C523–C571. Y452 bears the Phosphotyrosine; by ABL1 and SRC mark. Cysteines 730 and 793 form a disulfide. Y780 carries the phosphotyrosine; by ABL1 modification. A run of 4 repeats spans residues 856–883 (DVRG…VGQL), 884–911 (DFRD…AEQM), 912–939 (DFRA…PQQV), and 940–966 (DFRS…AATP). The tract at residues 856–985 (DVRGLLKRRV…KKSPSENGGN (130 aa)) is 5 X 28 AA approximate tandem repeats. The interval 911–951 (MDFRANLQRQVKPKTISEEERKVHSPQQVDFRSVLAKKGTP) is actin-binding (calcium/calmodulin-sensitive). The segment at 920–1120 (QVKPKTISEE…KRPESQGSAP (201 aa)) is disordered. S935 bears the Phosphoserine mark. The tract at residues 936–951 (PQQVDFRSVLAKKGTP) is calmodulin-binding. A 1-5; truncated repeat occupies 967–985 (DFRSVLGGKKKSPSENGGN). Tandem repeats lie at residues 990–1002 (LNVK…TPAG), 1003–1014 (DAQAIGALKPVG), 1015–1026 (NAKPAETPKPIG), 1027–1038 (NAKPTETLKPVG), and 1039–1049 (NTKPAETLKPI). The tract at residues 990 to 1049 (LNVKAGESPTPAGDAQAIGALKPVGNAKPAETPKPIGNAKPTETLKPVGNTKPAETLKPI) is 5 X 12 AA approximate tandem repeats. The tract at residues 1048 to 1482 (PIANAQPSGS…TVTVNTEQKV (435 aa)) is actin-binding (calcium/calmodulin-insensitive). Residues 1052-1065 (AQPSGSLKPVTNAQ) are compositionally biased toward polar residues. The segment covering 1085–1099 (AGKEEVKEVKNDVNC) has biased composition (basic and acidic residues). The Ig-like C2-type 7 domain maps to 1120-1208 (PVFKEKLQDV…GQAECSCQVT (89 aa)). C1141 and C1192 are oxidised to a cystine. Positions 1212-1257 (AQTSENTKAPEMKSRRPKSSLPPVLGTESDATVKKKPAPKTPTKAA) are disordered. An Ig-like C2-type 8 domain is found at 1260–1348 (PQIIQFPEDQ…GSRQAQVNLT (89 aa)). The 94-residue stretch at 1356–1449 (PAGTPCASDI…ESELTAVGEK (94 aa)) folds into the Fibronectin type-III domain. The interval 1435-1469 (SEPSQESELTAVGEKPEEPKDEVEVSDDDEKEPEV) is disordered. Positions 1453–1467 (PKDEVEVSDDDEKEP) are enriched in acidic residues. Phosphoserine is present on S1460. Phosphotyrosine; by ABL1 is present on Y1471. The Protein kinase domain maps to 1486–1741 (YDIEERLGSG…CTQCLQHPWL (256 aa)). ATP contacts are provided by residues 1492–1500 (LGSGKFGQV) and K1515. Y1597 carries the post-translational modification Phosphotyrosine; by ABL1. The Proton acceptor role is filled by D1607. At Y1657 the chain carries Phosphotyrosine; by ABL1. A calmodulin-binding region spans residues 1733-1796 (TQCLQHPWLM…SGLSGRKSST (64 aa)). Phosphoserine is present on residues S1781, S1782, S1794, S1795, and S1798. The tract at residues 1789-1809 (LSGRKSSTGSPTSPINAEKLE) is disordered. The span at 1792 to 1803 (RKSSTGSPTSPI) shows a compositional bias: polar residues. T1800 is modified (phosphothreonine). Phosphoserine is present on S1801. The 90-residue stretch at 1831–1920 (PYFSKTIRDL…GEATCTAELI (90 aa)) folds into the Ig-like C2-type 9 domain. A disulfide bridge links C1852 with C1904.

Belongs to the protein kinase superfamily. CAMK Ser/Thr protein kinase family. As to quaternary structure, all isoforms including Telokin bind calmodulin. Interacts with CTTN; this interaction is reduced during thrombin-induced endothelial cell (EC) contraction but is promoted by the barrier-protective agonist sphingosine 1-phosphate (S1P) within lamellipodia. A complex made of ABL1, CTTN and MYLK regulates cortical actin-based cytoskeletal rearrangement critical to sphingosine 1-phosphate (S1P)-mediated endothelial cell (EC) barrier enhancement. Binds to NAA10/ARD1. Interacts with SVIL and PTK2B/PYK2. Mg(2+) is required as a cofactor. Ca(2+) serves as cofactor. In terms of processing, can probably be down-regulated by phosphorylation. Tyrosine phosphorylation by ABL1 increases kinase activity, reverses MLCK-mediated inhibition of Arp2/3-mediated actin polymerization, and enhances CTTN-binding. Phosphorylation by SRC at Tyr-452 promotes CTTN binding. The C-terminus is deglutamylated by AGTPBP1/CCP1, AGBL1/CCP4 and AGBL4/CCP6, leading to the formation of Myosin light chain kinase, smooth muscle, deglutamylated form. The consequences of C-terminal deglutamylation are unknown. Smooth muscle isoform is expressed in all tissues with highest levels in bladder, uterus, vas deferens, colon, ileum, and tracheae. Isoform 1 is expressed in lung, bladder, and vas deferens. Telokin is expressed in smooth muscle cells of the gut, reproductive tract and urinary tract, including in uterus, vas deferens, bladder, colon, kidney, ureter and ovary. Telokin is also detected in the trachea.

Its subcellular location is the cytoplasm. It localises to the cell projection. It is found in the lamellipodium. The protein localises to the cleavage furrow. The protein resides in the cytoskeleton. Its subcellular location is the stress fiber. The catalysed reaction is L-seryl-[myosin light chain] + ATP = O-phospho-L-seryl-[myosin light chain] + ADP + H(+). The enzyme catalyses L-threonyl-[myosin light chain] + ATP = O-phospho-L-threonyl-[myosin light chain] + ADP + H(+). Calcium/calmodulin-dependent myosin light chain kinase implicated in smooth muscle contraction via phosphorylation of myosin light chains (MLC). Also regulates actin-myosin interaction through a non-kinase activity. Phosphorylates PTK2B/PYK2 and myosin light-chains. Involved in the inflammatory response (e.g. apoptosis, vascular permeability, leukocyte diapedesis), cell motility and morphology, airway hyperreactivity and other activities relevant to asthma. Required for tonic airway smooth muscle contraction that is necessary for physiological and asthmatic airway resistance. Necessary for gastrointestinal motility. Implicated in the regulation of endothelial as well as vascular permeability, probably via the regulation of cytoskeletal rearrangements. In the nervous system it has been shown to control the growth initiation of astrocytic processes in culture and to participate in transmitter release at synapses formed between cultured sympathetic ganglion cells. Critical participant in signaling sequences that result in fibroblast apoptosis. Plays a role in the regulation of epithelial cell survival. Required for epithelial wound healing, especially during actomyosin ring contraction during purse-string wound closure. Mediates RhoA-dependent membrane blebbing. Triggers TRPC5 channel activity in a calcium-dependent signaling, by inducing its subcellular localization at the plasma membrane. Promotes cell migration (including tumor cells) and tumor metastasis. PTK2B/PYK2 activation by phosphorylation mediates ITGB2 activation and is thus essential to trigger neutrophil transmigration during acute lung injury (ALI). May regulate optic nerve head astrocyte migration. Probably involved in mitotic cytoskeletal regulation. Regulates tight junction probably by modulating ZO-1 exchange in the perijunctional actomyosin ring. Mediates burn-induced microvascular barrier injury; triggers endothelial contraction in the development of microvascular hyperpermeability by phosphorylating MLC. Essential for intestinal barrier dysfunction. Mediates Giardia spp.-mediated reduced epithelial barrier function during giardiasis intestinal infection via reorganization of cytoskeletal F-actin and tight junctional ZO-1. Necessary for hypotonicity-induced Ca(2+) entry and subsequent activation of volume-sensitive organic osmolyte/anion channels (VSOAC) in cervical cancer cells. This chain is Myosin light chain kinase, smooth muscle, found in Mus musculus (Mouse).